Here is a 120-residue protein sequence, read N- to C-terminus: Proteinase inhibitor (120 aa).

An N-terminal signal peptide occupies residues 1 to 19 (MKQLIIATLLSALSGGCMA). A disulfide bridge connects residues Cys-43 and Cys-65.

The protein belongs to the protease inhibitor I38 family. As to quaternary structure, monomer.

It localises to the periplasm. Functionally, inhibitor of the extracellular proteases A, B, and C of E.chrysanthemi and the S.marcescens 50 kDa extracellular protease. It forms a non-covalent bond with the proteases and may prevent autocatalytic cleavage of the proteases zymogen in the periplasm. This chain is Proteinase inhibitor (inh), found in Dickeya chrysanthemi (Pectobacterium chrysanthemi).